The chain runs to 213 residues: Orotate phosphoribosyltransferase (213 aa).

Lys-26 is a 5-phospho-alpha-D-ribose 1-diphosphate binding site. Residue 34-35 (FF) participates in orotate binding. Residues 72–73 (YK), Arg-99, Lys-100, Lys-103, His-105, and 124–132 (DDVITAGTA) each bind 5-phospho-alpha-D-ribose 1-diphosphate. Orotate is bound by residues Thr-128 and Arg-156.

The protein belongs to the purine/pyrimidine phosphoribosyltransferase family. PyrE subfamily. As to quaternary structure, homodimer. Mg(2+) is required as a cofactor.

The catalysed reaction is orotidine 5'-phosphate + diphosphate = orotate + 5-phospho-alpha-D-ribose 1-diphosphate. It functions in the pathway pyrimidine metabolism; UMP biosynthesis via de novo pathway; UMP from orotate: step 1/2. In terms of biological role, catalyzes the transfer of a ribosyl phosphate group from 5-phosphoribose 1-diphosphate to orotate, leading to the formation of orotidine monophosphate (OMP). In Escherichia coli O139:H28 (strain E24377A / ETEC), this protein is Orotate phosphoribosyltransferase.